A 322-amino-acid chain; its full sequence is MTSSMSPAPAPAYAQVMEDMEKGKELAAQLQGLLRDSPEAGRFVDQILHTFSRAMRALDKAAVSAAGGEGSEVQSEVTCGGGASAGGKRKAPAANRKANCRRRTQQSSGNTVVVKNLDDGQAWRKYGQKEIQNSKHPKAYFRCTHKYDQMCTAQRQVQRCDDDPASYRVTYIGEHTCRDPATAPIIAAHVIHQVAAGDDDDGCGGLHAGSRLISFVAAPAAPVDAAAAPTTSTITTVTAPGPLLQPLKVEGGIGSSDQEEVLSSLTPGSSAARGGGVAGPFGPDQGDVTSSLHWSYDAVAGMEFFKNDEVVFDLDDIMGLSF.

The disordered stretch occupies residues 67-110; that stretch reads GGEGSEVQSEVTCGGGASAGGKRKAPAANRKANCRRRTQQSSGN. The segment at residues 112–180 is a DNA-binding region (WRKY); that stretch reads VVVKNLDDGQ…YIGEHTCRDP (69 aa). The disordered stretch occupies residues 256–284; it reads SDQEEVLSSLTPGSSAARGGGVAGPFGPD.

Belongs to the WRKY group III family. Expressed in aleurone cells.

Its subcellular location is the nucleus. In terms of biological role, transcriptional activator involved in defense responses against pathogens. Acts as a positive regulator of defense responses against the rice blast fungus Magnaporthe oryzae. Acts as a positive regulator of defense responses against the bacterial blight Xanthomonas oryzae pv oryzae (Xoo) and the bacterial streak Xanthomonas oryzae pv oryzicola (Xoc). Acts as a positive regulator of abscisic acid (ABA) signaling that suppresses growth of seedlings. Acts as a negative regulator of salt stress response. Acts as a negative regulator of cold stress response. Acts as a negative regulator of drought stress response. In Oryza sativa subsp. indica (Rice), this protein is Transcription factor WRKY45-2.